The following is a 326-amino-acid chain: Zinc-dependent endopolyphosphatase (326 aa).

Over 1-9 (MEDKRKRRA) the chain is Cytoplasmic. Residues 10–30 (ATLSTALILFVACCVYTLYIF) traverse the membrane as a helical segment. Residues 31–326 (KFDNPRLSPP…DYELIQVQCS (296 aa)) are Vacuolar-facing. Asparagine 90 and asparagine 241 each carry an N-linked (GlcNAc...) asparagine glycan.

It belongs to the metallophosphoesterase superfamily. In terms of assembly, interacts with PPN1. Zn(2+) serves as cofactor. The cofactor is Co(2+). It depends on Mg(2+) as a cofactor.

The protein resides in the vacuole membrane. It catalyses the reaction [phosphate](n+1) + n H2O = (n+1) phosphate + n H(+). Its activity is regulated as follows. Not sensitive to heparin inhibition. Its function is as follows. Catalyzes the hydrolysis of inorganic polyphosphate (polyP) chains of many hundreds of phosphate residues into shorter lengths. Exclusively shows endopolyphosphatase activity, cleaving inside the polyP chain. Together with PPN1, responsible for a substantial fraction of polyphosphatase activity that is necessary to mobilize polyP stores in response to phosphate scarcity. This Saccharomyces cerevisiae (strain ATCC 204508 / S288c) (Baker's yeast) protein is Zinc-dependent endopolyphosphatase.